The following is a 120-amino-acid chain: Immunoglobulin kappa variable 2-30 (120 aa).

Residues 1 to 20 (MRLPAQLLGLLMLWVPGSSG) form the signal peptide. The interval 21–43 (DVVMTQSPLSLPVTLGQPASISC) is framework-1. In terms of domain architecture, Ig-like spans 21–120 (DVVMTQSPLS…YYCMQGTHWP (100 aa)). A disulfide bond links cysteine 43 and cysteine 113. Positions 44-59 (RSSQSLVYSDGNTYLN) are complementarity-determining-1. The framework-2 stretch occupies residues 60–74 (WFQQRPGQSPRRLIY). The complementarity-determining-2 stretch occupies residues 75–81 (KVSNRDS). The segment at 82–113 (GVPDRFSGSGSGTDFTLKISRVEAEDVGVYYC) is framework-3. The tract at residues 114-120 (MQGTHWP) is complementarity-determining-3.

Immunoglobulins are composed of two identical heavy chains and two identical light chains; disulfide-linked.

It localises to the secreted. Its subcellular location is the cell membrane. In terms of biological role, v region of the variable domain of immunoglobulin light chains that participates in the antigen recognition. Immunoglobulins, also known as antibodies, are membrane-bound or secreted glycoproteins produced by B lymphocytes. In the recognition phase of humoral immunity, the membrane-bound immunoglobulins serve as receptors which, upon binding of a specific antigen, trigger the clonal expansion and differentiation of B lymphocytes into immunoglobulins-secreting plasma cells. Secreted immunoglobulins mediate the effector phase of humoral immunity, which results in the elimination of bound antigens. The antigen binding site is formed by the variable domain of one heavy chain, together with that of its associated light chain. Thus, each immunoglobulin has two antigen binding sites with remarkable affinity for a particular antigen. The variable domains are assembled by a process called V-(D)-J rearrangement and can then be subjected to somatic hypermutations which, after exposure to antigen and selection, allow affinity maturation for a particular antigen. The chain is Immunoglobulin kappa variable 2-30 from Homo sapiens (Human).